We begin with the raw amino-acid sequence, 347 residues long: MGSADDRRFEVLRAIVADFVATKEPIGSKTLVERHNLGVSSATVRNDMAVLEAEGYITQPHTSSGRVPTEKGYREFVDRLDDVKPLSSAERRAILKFLETGVDLDDVLRRAVRLLAQLTRQVAIVQYPTLSTSSVRHLEVVALTPARLLLVVITDTGRVDQRIVELGDAIDEHELATLRDLLGQALEGKRLSAASVAVSDLATHLSGSPGMSHRLADAVGRSATVLVETLVEHTEERLLLGGTANLTRNTADFGGSLRSVLEALEEQVVVLRLLAAQQEAGKVTVRIGHETEAEQMAGTSVVTTAYGSSGKVYGGMGVVGPTRMDYPGTIANVAAVALYIGEVLGTR.

It belongs to the HrcA family.

Negative regulator of class I heat shock genes (grpE-dnaK-dnaJ and groELS operons). Prevents heat-shock induction of these operons. This Mycobacterium sp. (strain JLS) protein is Heat-inducible transcription repressor HrcA.